Consider the following 171-residue polypeptide: Peptide deformylase (171 aa).

Cysteine 91 and histidine 133 together coordinate Fe cation. The active site involves glutamate 134. Histidine 137 lines the Fe cation pocket.

The protein belongs to the polypeptide deformylase family. Requires Fe(2+) as cofactor.

It carries out the reaction N-terminal N-formyl-L-methionyl-[peptide] + H2O = N-terminal L-methionyl-[peptide] + formate. In terms of biological role, removes the formyl group from the N-terminal Met of newly synthesized proteins. Requires at least a dipeptide for an efficient rate of reaction. N-terminal L-methionine is a prerequisite for activity but the enzyme has broad specificity at other positions. The sequence is that of Peptide deformylase from Edwardsiella ictaluri (strain 93-146).